Reading from the N-terminus, the 367-residue chain is Probable ATP-dependent RNA helicase MJ0669 (367 aa).

The short motif at 6-34 (MNFNELNLSDNILNAIRNKGFEKPTDIQM) is the Q motif element. In terms of domain architecture, Helicase ATP-binding spans 38–206 (PLFLNDEYNI…KKYMGDYSFI (169 aa)). An ATP-binding site is contributed by 51–58 (ARTGSGKT). Residues 154-157 (DEAD) carry the DEAD box motif. A Helicase C-terminal domain is found at 213–367 (NIEQSYVEVN…KLKIKKLKFG (155 aa)).

It belongs to the DEAD box helicase family. Homodimer.

The catalysed reaction is ATP + H2O = ADP + phosphate + H(+). The sequence is that of Probable ATP-dependent RNA helicase MJ0669 from Methanocaldococcus jannaschii (strain ATCC 43067 / DSM 2661 / JAL-1 / JCM 10045 / NBRC 100440) (Methanococcus jannaschii).